The following is a 559-amino-acid chain: T-complex protein 1 subunit gamma (559 aa).

An intrachain disulfide couples C368 to C374. Residues 531-559 (KDKRGGAGQRGGDRGQGDQEETFGDQRDG) form a disordered region.

The protein belongs to the TCP-1 chaperonin family. As to quaternary structure, heterooligomeric complex of about 850 to 900 kDa that forms two stacked rings, 12 to 16 nm in diameter.

The protein localises to the cytoplasm. Its function is as follows. Molecular chaperone; assists the folding of proteins upon ATP hydrolysis. Known to play a role, in vitro, in the folding of actin and tubulin. The sequence is that of T-complex protein 1 subunit gamma from Oxytricha granulifera (Ciliate).